A 262-amino-acid polypeptide reads, in one-letter code: Ribosomal RNA small subunit methyltransferase A (262 aa).

Residues His16, Leu18, Gly43, Glu64, Asp89, and Asn109 each contribute to the S-adenosyl-L-methionine site.

Belongs to the class I-like SAM-binding methyltransferase superfamily. rRNA adenine N(6)-methyltransferase family. RsmA subfamily.

It localises to the cytoplasm. The catalysed reaction is adenosine(1518)/adenosine(1519) in 16S rRNA + 4 S-adenosyl-L-methionine = N(6)-dimethyladenosine(1518)/N(6)-dimethyladenosine(1519) in 16S rRNA + 4 S-adenosyl-L-homocysteine + 4 H(+). Its function is as follows. Specifically dimethylates two adjacent adenosines (A1518 and A1519) in the loop of a conserved hairpin near the 3'-end of 16S rRNA in the 30S particle. May play a critical role in biogenesis of 30S subunits. The protein is Ribosomal RNA small subunit methyltransferase A of Xanthomonas oryzae pv. oryzae (strain MAFF 311018).